Consider the following 272-residue polypeptide: NH(3)-dependent NAD(+) synthetase (272 aa).

45–52 is a binding site for ATP; that stretch reads GISGGQDS. D51 is a binding site for Mg(2+). R138 is a deamido-NAD(+) binding site. T158 serves as a coordination point for ATP. Mg(2+) is bound at residue E163. Deamido-NAD(+) is bound by residues K171 and D178. ATP contacts are provided by K187 and T209. 258 to 259 is a binding site for deamido-NAD(+); it reads HK.

The protein belongs to the NAD synthetase family. As to quaternary structure, homodimer.

It carries out the reaction deamido-NAD(+) + NH4(+) + ATP = AMP + diphosphate + NAD(+) + H(+). Its pathway is cofactor biosynthesis; NAD(+) biosynthesis; NAD(+) from deamido-NAD(+) (ammonia route): step 1/1. Its function is as follows. Catalyzes the ATP-dependent amidation of deamido-NAD to form NAD. Uses ammonia as a nitrogen source. This chain is NH(3)-dependent NAD(+) synthetase, found in Bacillus cereus (strain ATCC 14579 / DSM 31 / CCUG 7414 / JCM 2152 / NBRC 15305 / NCIMB 9373 / NCTC 2599 / NRRL B-3711).